The chain runs to 716 residues: Translation initiation factor IF-2 (716 aa).

The disordered stretch occupies residues Tyr50 to Lys136. Over residues Pro62–Asn84 the composition is skewed to polar residues. Residues Lys101–Arg113 show a composition bias toward basic residues. The segment covering Asn114–Pro126 has biased composition (low complexity). The 170-residue stretch at Ile217–Lys386 folds into the tr-type G domain. Positions Gly226–Thr233 are G1. Gly226–Thr233 contributes to the GTP binding site. The interval Gly251–His255 is G2. A G3 region spans residues Asp272–Gly275. GTP-binding positions include Asp272 to His276 and Asn326 to Asp329. Positions Asn326–Asp329 are G4. The segment at Ser362 to Leu364 is G5.

Belongs to the TRAFAC class translation factor GTPase superfamily. Classic translation factor GTPase family. IF-2 subfamily.

The protein resides in the cytoplasm. Functionally, one of the essential components for the initiation of protein synthesis. Protects formylmethionyl-tRNA from spontaneous hydrolysis and promotes its binding to the 30S ribosomal subunits. Also involved in the hydrolysis of GTP during the formation of the 70S ribosomal complex. The polypeptide is Translation initiation factor IF-2 (infB) (Bacillus subtilis (strain 168)).